We begin with the raw amino-acid sequence, 261 residues long: Pantothenate synthetase (261 aa).

ATP is bound at residue 29–36; sequence MGALHNGH. Residue His36 is the Proton donor of the active site. Gln60 provides a ligand contact to (R)-pantoate. Gln60 provides a ligand contact to beta-alanine. 147–150 contributes to the ATP binding site; it reads GEKD. Position 153 (Gln153) interacts with (R)-pantoate. ATP is bound at residue 184–187; it reads LSSR.

The protein belongs to the pantothenate synthetase family. Homodimer.

The protein localises to the cytoplasm. It carries out the reaction (R)-pantoate + beta-alanine + ATP = (R)-pantothenate + AMP + diphosphate + H(+). It functions in the pathway cofactor biosynthesis; (R)-pantothenate biosynthesis; (R)-pantothenate from (R)-pantoate and beta-alanine: step 1/1. In terms of biological role, catalyzes the condensation of pantoate with beta-alanine in an ATP-dependent reaction via a pantoyl-adenylate intermediate. The sequence is that of Pantothenate synthetase from Francisella tularensis subsp. mediasiatica (strain FSC147).